Here is a 305-residue protein sequence, read N- to C-terminus: UDP-3-O-acyl-N-acetylglucosamine deacetylase (305 aa).

Positions 78, 237, and 241 each coordinate Zn(2+). H264 serves as the catalytic Proton donor.

It belongs to the LpxC family. Zn(2+) is required as a cofactor.

It catalyses the reaction a UDP-3-O-[(3R)-3-hydroxyacyl]-N-acetyl-alpha-D-glucosamine + H2O = a UDP-3-O-[(3R)-3-hydroxyacyl]-alpha-D-glucosamine + acetate. It participates in glycolipid biosynthesis; lipid IV(A) biosynthesis; lipid IV(A) from (3R)-3-hydroxytetradecanoyl-[acyl-carrier-protein] and UDP-N-acetyl-alpha-D-glucosamine: step 2/6. Its function is as follows. Catalyzes the hydrolysis of UDP-3-O-myristoyl-N-acetylglucosamine to form UDP-3-O-myristoylglucosamine and acetate, the committed step in lipid A biosynthesis. The polypeptide is UDP-3-O-acyl-N-acetylglucosamine deacetylase (Burkholderia thailandensis (strain ATCC 700388 / DSM 13276 / CCUG 48851 / CIP 106301 / E264)).